Consider the following 683-residue polypeptide: Methionine--tRNA ligase (683 aa).

Positions 15-25 (PYANGPIHLGH) match the 'HIGH' region motif. Zn(2+) contacts are provided by cysteine 146, cysteine 149, cysteine 159, and cysteine 162. The 'KMSKS' region signature appears at 332-336 (KMSKS). Lysine 335 provides a ligand contact to ATP. The tRNA-binding domain occupies 582-683 (DFAKIDLRIA…EGALPGMRVK (102 aa)).

It belongs to the class-I aminoacyl-tRNA synthetase family. MetG type 1 subfamily. In terms of assembly, homodimer. Zn(2+) serves as cofactor.

Its subcellular location is the cytoplasm. It catalyses the reaction tRNA(Met) + L-methionine + ATP = L-methionyl-tRNA(Met) + AMP + diphosphate. Is required not only for elongation of protein synthesis but also for the initiation of all mRNA translation through initiator tRNA(fMet) aminoacylation. The protein is Methionine--tRNA ligase of Shewanella frigidimarina (strain NCIMB 400).